The chain runs to 89 residues: Small ribosomal subunit protein uS15 (89 aa).

Positions 1–10 (MSITAEKKQE) are enriched in basic and acidic residues. Residues 1 to 24 (MSITAEKKQEVIQSNARAEGDTGS) are disordered.

It belongs to the universal ribosomal protein uS15 family. Part of the 30S ribosomal subunit. Forms a bridge to the 50S subunit in the 70S ribosome, contacting the 23S rRNA.

One of the primary rRNA binding proteins, it binds directly to 16S rRNA where it helps nucleate assembly of the platform of the 30S subunit by binding and bridging several RNA helices of the 16S rRNA. In terms of biological role, forms an intersubunit bridge (bridge B4) with the 23S rRNA of the 50S subunit in the ribosome. This chain is Small ribosomal subunit protein uS15, found in Novosphingobium aromaticivorans (strain ATCC 700278 / DSM 12444 / CCUG 56034 / CIP 105152 / NBRC 16084 / F199).